We begin with the raw amino-acid sequence, 585 residues long: Glutamine--tRNA ligase (585 aa).

The short motif at 51-61 (PEPNGYLHIGH) is the 'HIGH' region element. Residues 52–54 (EPN) and 58–64 (HIGHAKS) contribute to the ATP site. L-glutamine contacts are provided by Asp-84 and Tyr-238. ATP-binding positions include Thr-257 and 292-293 (RL). The short motif at 299-303 (ITSKR) is the 'KMSKS' region element.

Belongs to the class-I aminoacyl-tRNA synthetase family. In terms of assembly, monomer.

It is found in the cytoplasm. It catalyses the reaction tRNA(Gln) + L-glutamine + ATP = L-glutaminyl-tRNA(Gln) + AMP + diphosphate. The sequence is that of Glutamine--tRNA ligase from Cupriavidus taiwanensis (strain DSM 17343 / BCRC 17206 / CCUG 44338 / CIP 107171 / LMG 19424 / R1) (Ralstonia taiwanensis (strain LMG 19424)).